A 181-amino-acid chain; its full sequence is MKMLLLLLCLGLTLVCVHAEEASSTGRNFNVEKINGEWHTIILASDKREKIEDNGNFRLFLEQIHVLENSLVLKFHTVRDEECSELSMVADKTEKAGEYSVTYDGFNTFTIPKTDYDNFLMAHLINEKDGETFQLMGLYGREPDLSSDIKERFAQLCEEHGILRENIIDLSNANRCLQARE.

The signal sequence occupies residues 1–19 (MKMLLLLLCLGLTLVCVHA). The cysteines at positions 83 and 176 are disulfide-linked.

This sequence belongs to the calycin superfamily. Lipocalin family.

It localises to the secreted. Its function is as follows. Major urinary proteins (Mups) bind pheromones, and thus stabilize them to allow slow release into the air from urine marks. May protect pheromones from oxidation. May also act as pheromones themselves. In this context, they play a role in the regulation of social behaviors, such as aggression, mating, pup-suckling, territory establishment and dominance. Binds the pheromone analog 2-sec-butyl-4,5-dihydrothiazole (SBT) in vitro. This chain is Major urinary protein 11, found in Mus musculus (Mouse).